The sequence spans 180 residues: Large ribosomal subunit protein uL5 (180 aa).

It belongs to the universal ribosomal protein uL5 family. As to quaternary structure, part of the 50S ribosomal subunit; part of the 5S rRNA/L5/L18/L25 subcomplex. Contacts the 5S rRNA and the P site tRNA. Forms a bridge to the 30S subunit in the 70S ribosome.

In terms of biological role, this is one of the proteins that bind and probably mediate the attachment of the 5S RNA into the large ribosomal subunit, where it forms part of the central protuberance. In the 70S ribosome it contacts protein S13 of the 30S subunit (bridge B1b), connecting the 2 subunits; this bridge is implicated in subunit movement. Contacts the P site tRNA; the 5S rRNA and some of its associated proteins might help stabilize positioning of ribosome-bound tRNAs. This chain is Large ribosomal subunit protein uL5, found in Anaeromyxobacter dehalogenans (strain 2CP-1 / ATCC BAA-258).